The sequence spans 410 residues: MRTRAGAFFGKQRSTSPSGSSTSASRQWLRSSPGRTQRPAAHRVLAVCVRNPARPAADHPLVSTTQAAAQRQARQWDSRSKPPQLQPQLRHTHVSRQAQRRQQQQVQQQAEAGALVVPTVITSFPEHLRPEVLANGVLLVDKPPHWEVPEVVAAVQRATGADKVASVAPLDARASGLMLLCFGSATRLAPRVERAAKRYTGTLVLGGSSLSGDVRGGSFRAAQLPAEHLTDEDLREAAQGLVTAAAGAPVHGAVATGHQGGGGLALRVLPRTWRLRQLPSSTEYYEERVEPSMRTLDMELLDFRVWRESALSHNDGAAGAEYDQHDQHKQELGRGLVWTRSPPHPRPVVLRFSALLVGRSHVRSLIAMYGRRLRTAACLDDLRRTEIGSFNVEEAWPLEALVPVLQRHAH.

Disordered regions lie at residues 1–40 (MRTRAGAFFGKQRSTSPSGSSTSASRQWLRSSPGRTQRPA) and 56–106 (AADH…QQQV). Residues 1 to 46 (MRTRAGAFFGKQRSTSPSGSSTSASRQWLRSSPGRTQRPAAHRVLA) constitute a chloroplast transit peptide. The segment covering 14 to 25 (STSPSGSSTSAS) has biased composition (low complexity). A compositionally biased stretch (polar residues) spans 26–35 (RQWLRSSPGR). Positions 96–106 (RQAQRRQQQQV) are enriched in low complexity.

The protein belongs to the pseudouridine synthase TruB family. As to quaternary structure, possibly associated with other factors required for trans-splicing.

It localises to the plastid. It is found in the chloroplast. Functionally, required for trans-splicing of exons 2 and 3 of the chloroplast encoded psaA mRNA (a group II intron). It is not known if this protein has pseudouridine activity; mutation of the potential active site residue does not cause loss of trans-splicing. This Chlamydomonas reinhardtii (Chlamydomonas smithii) protein is Trans-splicing factor Raa2, chloroplastic (RAA2).